The sequence spans 285 residues: Nucleotide-binding protein in ptsN-ptsO intergenic region (285 aa).

8–15 (GRSGSGKS) is an ATP binding site. 60–63 (DARN) lines the GTP pocket.

Belongs to the RapZ-like family.

Functionally, displays ATPase and GTPase activities. This chain is Nucleotide-binding protein in ptsN-ptsO intergenic region, found in Stutzerimonas stutzeri (Pseudomonas stutzeri).